The primary structure comprises 331 residues: Biotin synthase (331 aa).

The region spanning 51–278 is the Radical SAM core domain; sequence QTIQLSTLMS…KSYVRLSAGR (228 aa). [4Fe-4S] cluster is bound by residues Cys66, Cys70, and Cys73. 4 residues coordinate [2Fe-2S] cluster: Cys110, Cys141, Cys201, and Arg273.

It belongs to the radical SAM superfamily. Biotin synthase family. As to quaternary structure, homodimer. Requires [4Fe-4S] cluster as cofactor. [2Fe-2S] cluster is required as a cofactor.

The enzyme catalyses (4R,5S)-dethiobiotin + (sulfur carrier)-SH + 2 reduced [2Fe-2S]-[ferredoxin] + 2 S-adenosyl-L-methionine = (sulfur carrier)-H + biotin + 2 5'-deoxyadenosine + 2 L-methionine + 2 oxidized [2Fe-2S]-[ferredoxin]. Its pathway is cofactor biosynthesis; biotin biosynthesis; biotin from 7,8-diaminononanoate: step 2/2. Its function is as follows. Catalyzes the conversion of dethiobiotin (DTB) to biotin by the insertion of a sulfur atom into dethiobiotin via a radical-based mechanism. The protein is Biotin synthase of Histophilus somni (strain 129Pt) (Haemophilus somnus).